A 147-amino-acid chain; its full sequence is Hemoglobin subunit gamma (147 aa).

Residues 3-147 form the Globin domain; sequence DFTAEEKAAI…VASAVARKYH (145 aa). 2 residues coordinate heme b: H64 and H93.

Belongs to the globin family. Heterotetramer of two alpha chains and two gamma chains in fetal hemoglobin (Hb F). Red blood cells.

In terms of biological role, gamma chains make up the fetal hemoglobin F, in combination with alpha chains. The sequence is that of Hemoglobin subunit gamma (HBG) from Trichechus manatus (Caribbean manatee).